We begin with the raw amino-acid sequence, 292 residues long: Diaminopimelate epimerase (292 aa).

Residues asparagine 13, glutamine 46, and asparagine 66 each contribute to the substrate site. The Proton donor role is filled by cysteine 75. Substrate contacts are provided by residues 76–77 (GN), asparagine 166, asparagine 199, and 217–218 (ER). The Proton acceptor role is filled by cysteine 226. 227–228 (GT) is a binding site for substrate.

The protein belongs to the diaminopimelate epimerase family. Homodimer.

The protein localises to the cytoplasm. The catalysed reaction is (2S,6S)-2,6-diaminopimelate = meso-2,6-diaminopimelate. It functions in the pathway amino-acid biosynthesis; L-lysine biosynthesis via DAP pathway; DL-2,6-diaminopimelate from LL-2,6-diaminopimelate: step 1/1. In terms of biological role, catalyzes the stereoinversion of LL-2,6-diaminopimelate (L,L-DAP) to meso-diaminopimelate (meso-DAP), a precursor of L-lysine and an essential component of the bacterial peptidoglycan. In Ralstonia nicotianae (strain ATCC BAA-1114 / GMI1000) (Ralstonia solanacearum), this protein is Diaminopimelate epimerase.